A 236-amino-acid polypeptide reads, in one-letter code: Sensory rhodopsin II (236 aa).

7 helical membrane-spanning segments follow: residues 4-24 (ITTW…VLAY), 38-58 (LLLI…ALGF), 73-93 (YVDW…LAGA), 101-121 (LVVL…TPSP), 122-142 (VSYA…YLLY), 167-187 (FVVV…AGVG), and 196-216 (LVVV…ALLA). Position 206 is an N6-(retinylidene)lysine (K206).

Belongs to the archaeal/bacterial/fungal opsin family. In terms of processing, the covalent binding of retinal to the apoprotein, bacterioopsin, generates bacteriorhodopsin.

The protein localises to the membrane. Functionally, mediates the photorepellent response. The protein is Sensory rhodopsin II (sop2) of Haloarcula marismortui (strain ATCC 43049 / DSM 3752 / JCM 8966 / VKM B-1809) (Halobacterium marismortui).